The primary structure comprises 345 residues: Methionine import ATP-binding protein MetN (345 aa).

The region spanning 2 to 241 (IKLNNIXKIF…PKTELAQEFI (240 aa)) is the ABC transporter domain. 38 to 45 (GASGAGKS) contacts ATP.

Belongs to the ABC transporter superfamily. Methionine importer (TC 3.A.1.24) family. In terms of assembly, the complex is composed of two ATP-binding proteins (MetN), two transmembrane proteins (MetI) and a solute-binding protein (MetQ).

The protein localises to the cell inner membrane. The catalysed reaction is L-methionine(out) + ATP + H2O = L-methionine(in) + ADP + phosphate + H(+). The enzyme catalyses D-methionine(out) + ATP + H2O = D-methionine(in) + ADP + phosphate + H(+). In terms of biological role, part of the ABC transporter complex MetNIQ involved in methionine import. Responsible for energy coupling to the transport system. In Haemophilus influenzae (strain ATCC 51907 / DSM 11121 / KW20 / Rd), this protein is Methionine import ATP-binding protein MetN.